Consider the following 369-residue polypeptide: Isopentenyl-diphosphate delta-isomerase (369 aa).

Residue 9 to 10 (RK) participates in substrate binding. FMN contacts are provided by residues T65, 66–68 (GMT), S96, and N125. 96–98 (SQR) contacts substrate. Substrate is bound at residue Q160. Residue E161 coordinates Mg(2+). FMN contacts are provided by residues K193, S218, T223, 275–277 (GVR), and 296–297 (AL).

The protein belongs to the IPP isomerase type 2 family. Homooctamer. Dimer of tetramers. FMN is required as a cofactor. It depends on NADPH as a cofactor. Requires Mg(2+) as cofactor.

The protein resides in the cytoplasm. It carries out the reaction isopentenyl diphosphate = dimethylallyl diphosphate. Involved in the biosynthesis of isoprenoids. Catalyzes the 1,3-allylic rearrangement of the homoallylic substrate isopentenyl (IPP) to its allylic isomer, dimethylallyl diphosphate (DMAPP). This chain is Isopentenyl-diphosphate delta-isomerase, found in Sulfurisphaera tokodaii (strain DSM 16993 / JCM 10545 / NBRC 100140 / 7) (Sulfolobus tokodaii).